A 73-amino-acid chain; its full sequence is Putative antitoxin VapB21 (73 aa).

This sequence belongs to the UPF0330 family.

In terms of biological role, possibly the antitoxin component of a type II toxin-antitoxin (TA) system. Its cognate toxin is VapC21 (Potential). This Sulfurisphaera tokodaii (strain DSM 16993 / JCM 10545 / NBRC 100140 / 7) (Sulfolobus tokodaii) protein is Putative antitoxin VapB21 (vapB21).